We begin with the raw amino-acid sequence, 139 residues long: ATP synthase epsilon chain (139 aa).

This sequence belongs to the ATPase epsilon chain family. F-type ATPases have 2 components, CF(1) - the catalytic core - and CF(0) - the membrane proton channel. CF(1) has five subunits: alpha(3), beta(3), gamma(1), delta(1), epsilon(1). CF(0) has three main subunits: a, b and c.

It is found in the cell inner membrane. Produces ATP from ADP in the presence of a proton gradient across the membrane. This Acinetobacter baumannii (strain AB307-0294) protein is ATP synthase epsilon chain.